Reading from the N-terminus, the 208-residue chain is Urease accessory protein UreE (208 aa).

Positions 145-165 are disordered; that stretch reads EGGAYSAGGHGHTHAPAATPV.

This sequence belongs to the UreE family.

It is found in the cytoplasm. Its function is as follows. Involved in urease metallocenter assembly. Binds nickel. Probably functions as a nickel donor during metallocenter assembly. This is Urease accessory protein UreE from Polaromonas naphthalenivorans (strain CJ2).